Reading from the N-terminus, the 538-residue chain is Putative cysteine ligase BshC (538 aa).

Residues 248-268 (ISKYKEVQEGLRNQQEVIKEL) adopt a coiled-coil conformation.

This sequence belongs to the BshC family.

Involved in bacillithiol (BSH) biosynthesis. May catalyze the last step of the pathway, the addition of cysteine to glucosamine malate (GlcN-Mal) to generate BSH. The chain is Putative cysteine ligase BshC from Bacillus cereus (strain B4264).